The primary structure comprises 239 residues: Suppressor of organelle fusion 1 (239 aa).

Belongs to the WD repeat WDR91 family. Interacts with sorf-2; the interaction is direct. Interacts with bec-1.

It localises to the early endosome. Its subcellular location is the late endosome. The protein localises to the cytoplasm. Functionally, together with sorf-2 negatively regulates the levels of phosphatidylinositol 3-phosphate (PtdIns3P) to enable the conversion of early endosomes to late endosomes. Binds to sorf-2 and the sorf-1-sorf-2 complex likely acts through bec-1, a non-catalytic subunit of phosphatidylinositol 3-kinase (PI3K), to suppress PI3K activity, thereby negatively regulating endosomal PtdIns3P levels. This chain is Suppressor of organelle fusion 1, found in Caenorhabditis elegans.